The chain runs to 140 residues: Fluoride-specific ion channel FluC 1 (140 aa).

A run of 4 helical transmembrane segments spans residues 3-23 (TGAT…GAAA), 38-58 (APLW…GLVL), 80-100 (ILYP…STVM), and 113-133 (IAGV…ALWC). Na(+)-binding residues include Gly91 and Thr94.

This sequence belongs to the fluoride channel Fluc/FEX (TC 1.A.43) family.

It is found in the cell membrane. It catalyses the reaction fluoride(in) = fluoride(out). Na(+) is not transported, but it plays an essential structural role and its presence is essential for fluoride channel function. Its function is as follows. Fluoride-specific ion channel. Important for reducing fluoride concentration in the cell, thus reducing its toxicity. The chain is Fluoride-specific ion channel FluC 1 from Corynebacterium jeikeium (strain K411).